Reading from the N-terminus, the 430-residue chain is Ribosomal protein uS12 methylthiotransferase RimO (430 aa).

The MTTase N-terminal domain maps to 1–116; sequence MKIGIKVLGC…IAEAIEKATP (116 aa). Residues C10, C46, C79, C146, C150, and C153 each contribute to the [4Fe-4S] cluster site. The Radical SAM core domain maps to 132–362; it reads SCNNSFAYVK…LIFQSQIAYE (231 aa). A TRAM domain is found at 365-430; that stretch reads KRFVGKNLNV…DEYDLKGELI (66 aa).

The protein belongs to the methylthiotransferase family. RimO subfamily. [4Fe-4S] cluster serves as cofactor.

It localises to the cytoplasm. It carries out the reaction L-aspartate(89)-[ribosomal protein uS12]-hydrogen + (sulfur carrier)-SH + AH2 + 2 S-adenosyl-L-methionine = 3-methylsulfanyl-L-aspartate(89)-[ribosomal protein uS12]-hydrogen + (sulfur carrier)-H + 5'-deoxyadenosine + L-methionine + A + S-adenosyl-L-homocysteine + 2 H(+). Its function is as follows. Catalyzes the methylthiolation of an aspartic acid residue of ribosomal protein uS12. In Pseudothermotoga lettingae (strain ATCC BAA-301 / DSM 14385 / NBRC 107922 / TMO) (Thermotoga lettingae), this protein is Ribosomal protein uS12 methylthiotransferase RimO.